The following is a 126-amino-acid chain: Protein ApaG (126 aa).

An ApaG domain is found at 2–126 (SALDNSIRVE…FRLATPGLLH (125 aa)).

The polypeptide is Protein ApaG (Shewanella oneidensis (strain ATCC 700550 / JCM 31522 / CIP 106686 / LMG 19005 / NCIMB 14063 / MR-1)).